The following is a 202-amino-acid chain: Imidazoleglycerol-phosphate dehydratase (202 aa).

Belongs to the imidazoleglycerol-phosphate dehydratase family.

It is found in the cytoplasm. It carries out the reaction D-erythro-1-(imidazol-4-yl)glycerol 3-phosphate = 3-(imidazol-4-yl)-2-oxopropyl phosphate + H2O. It functions in the pathway amino-acid biosynthesis; L-histidine biosynthesis; L-histidine from 5-phospho-alpha-D-ribose 1-diphosphate: step 6/9. The protein is Imidazoleglycerol-phosphate dehydratase of Chelativorans sp. (strain BNC1).